A 144-amino-acid polypeptide reads, in one-letter code: Arsenate reductase ArsI1 (144 aa).

Cys14 serves as the catalytic Nucleophile; cysteine thioarsenate intermediate.

It belongs to the ArsC family.

The catalysed reaction is [glutaredoxin]-dithiol + arsenate + glutathione + H(+) = glutathionyl-S-S-[glutaredoxin] + arsenite + H2O. Catalyzes the reduction of arsenate [As(V)] to arsenite [As(III)]. Does not constitute the major arsenate reductase in cells: essential only in the absence of ArsC (AC P74313). The sequence is that of Arsenate reductase ArsI1 from Synechocystis sp. (strain ATCC 27184 / PCC 6803 / Kazusa).